The primary structure comprises 556 residues: 2-succinyl-5-enolpyruvyl-6-hydroxy-3-cyclohexene-1-carboxylate synthase (556 aa).

Belongs to the TPP enzyme family. MenD subfamily. Homodimer. The cofactor is Mg(2+). Mn(2+) is required as a cofactor. Thiamine diphosphate serves as cofactor.

The enzyme catalyses isochorismate + 2-oxoglutarate + H(+) = 5-enolpyruvoyl-6-hydroxy-2-succinyl-cyclohex-3-ene-1-carboxylate + CO2. The protein operates within quinol/quinone metabolism; 1,4-dihydroxy-2-naphthoate biosynthesis; 1,4-dihydroxy-2-naphthoate from chorismate: step 2/7. It participates in quinol/quinone metabolism; menaquinone biosynthesis. Functionally, catalyzes the thiamine diphosphate-dependent decarboxylation of 2-oxoglutarate and the subsequent addition of the resulting succinic semialdehyde-thiamine pyrophosphate anion to isochorismate to yield 2-succinyl-5-enolpyruvyl-6-hydroxy-3-cyclohexene-1-carboxylate (SEPHCHC). In Salmonella paratyphi C (strain RKS4594), this protein is 2-succinyl-5-enolpyruvyl-6-hydroxy-3-cyclohexene-1-carboxylate synthase.